The sequence spans 1318 residues: MLDVNFFDELRIGLASAEDIRNWSYGEVKKPETINYRTLKPEKDGLFCEKIFGPTRDWECYCGKYKRVRFKGIICERCGVEVTRAKVRRERMGHIELAAPVTHIWYFKGVPSRLGYLLDLAPKDLEKIIYFAAYVIVGVDEELRHNELSTLEAEMQVEKKSVADQRDADLEARAQKLEADIAELEAEGAKSDVRRKVKDGGEREMRQLRDRAQRELDRLDEIWTTFTKLSVKQLIVDELLYRELVDRYGEYFTGAMGAESIQKLMENFDIDAEAENLRETIRSGKGQKKLRALKRLKVVAAFQTNQNSPMGMVLNAVPVIPPELRPMVQLDGGRFATSDLNDLYRRVINRNNRLKRLIDLGAPEIIVNNEKRMLQESVDALFDNGRRGRPVTGPGNRPLKSLSDLLKGKQGRFRQNLLGKRVDYSGRSVIVVGPQLKLHQCGLPKLMALELFKPFVMKRLVDLNHAQNIKSAKRMVERQRAQVWDVLEEVIAEHPVLLNRAPTLHRLGIQAFEPQLVEGKAIQLHPLVCEAFNADFDGDQMAVHLPLSAEAQAEARILMLSSNNILSPASGRPLAMPRLDMVTGLYHLTRLDEGAIGELAASTSDEAEQGVYSSPAEAQMAVDRGALVVQAKIKVRLTQQRPPRDIESELFPEGWNYGDGWTAETTLGRVLFNELLPADYPFVNEQMPKKRQATIINDLAERYPMIVVAQTVDKLKDAGFYWATRSGVTVSISDVLVPPEKAQIMESFEAQADQIEKKYQRGALNKTERNSALVKIWSEATDEVGKAMEAHFPDDNPIPMIVKSGAAGNMTQVRSLAGMKGLVTNPKGEFIPRPIKSSFKEGLTVLEYFINTHGARKGLADTALRTADSGYLTRRLVDVSQDVIVREVDCGTERGIVTTIAEKQADGTLIRDAHVETSTYARTLAADAVDENGNVIVERGHDLGDPAIDALLEAGITQVKVRSVLTCTTGTGVCATCYGRSMATGKLVDIGEAVGIVAAQSIGEPGTQLTMRTFHQGGVAGDDITGGLPRVQELFEARVPKGKAPIADVSGRVQLEDGDRFYKITIVPDDGGEEVVYDKLSKRQRLRVFKHDDGTERLLADGDHVEVGQQLMEGAADPHEVLRVMGPRQVQIHLVNEVQEVYRSQGVSIHDKHIEVIVRQMLRRVTIIDSGATEFLPGSLTERADFEAANRRVVAEGGEPAAGRPVLMGITKASLATDSWLSAASFQETTRVLTDAAINCRSDKLIGLKENVIIGKLIPAGTGINRYRNIQVQPTEEARAAAYAVPSYDDQYYSPDGFGQNTGAAVPLDDYGFSNDYR.

Residues C60, C62, C75, and C78 each contribute to the Zn(2+) site. 3 residues coordinate Mg(2+): D535, D537, and D539. The Zn(2+) site is built by C890, C967, C974, and C977.

The protein belongs to the RNA polymerase beta' chain family. As to quaternary structure, the RNAP catalytic core consists of 2 alpha, 1 beta, 1 beta' and 1 omega subunit. When a sigma factor is associated with the core the holoenzyme is formed, which can initiate transcription. Requires Mg(2+) as cofactor. The cofactor is Zn(2+).

It carries out the reaction RNA(n) + a ribonucleoside 5'-triphosphate = RNA(n+1) + diphosphate. In terms of biological role, DNA-dependent RNA polymerase catalyzes the transcription of DNA into RNA using the four ribonucleoside triphosphates as substrates. The chain is DNA-directed RNA polymerase subunit beta' from Rhodococcus jostii (strain RHA1).